The primary structure comprises 1029 residues: Putative B3 domain-containing protein Os03g0621600 (1029 aa).

3 DNA-binding regions (TF-B3) span residues aspartate 147–serine 240, valine 339–lysine 430, and glutamate 450–serine 543. A disordered region spans residues threonine 572–proline 605. Positions serine 591–proline 605 are enriched in polar residues. The TF-B3 4 DNA-binding region spans tyrosine 731 to serine 824. The segment covering serine 852–serine 867 has biased composition (polar residues). A disordered region spans residues serine 852–threonine 882. Positions glycine 934 to lysine 1029 form a DNA-binding region, TF-B3 5.

It localises to the nucleus. This chain is Putative B3 domain-containing protein Os03g0621600, found in Oryza sativa subsp. japonica (Rice).